The chain runs to 582 residues: 15-cis-phytoene desaturase, chloroplastic/chromoplastic (582 aa).

A chloroplast and chromoplast-targeting transit peptide spans 1–93; sequence MNLLGSISTG…ELENTINFLE (93 aa). FAD-binding positions include Ala121, 140 to 141, Lys148, 165 to 166, and Tyr171; these read EA and HI. Position 306 (Arg306) interacts with substrate. Residue Asp537 coordinates FAD. A substrate-binding site is contributed by Ala545. Residue Met547 coordinates FAD.

Belongs to the carotenoid/retinoid oxidoreductase family. In terms of assembly, homotetramer. The cofactor is FAD. Expressed in flower buds and lips. Lower expression in leaves and roots.

Its subcellular location is the plastid. The protein localises to the chloroplast. It localises to the chromoplast. It is found in the membrane. It catalyses the reaction 2 a plastoquinone + 15-cis-phytoene = 9,9',15-tri-cis-zeta-carotene + 2 a plastoquinol. The protein operates within carotenoid biosynthesis; lycopene biosynthesis. Its function is as follows. Converts phytoene into zeta-carotene via the intermediary of phytofluene by the symmetrical introduction of two double bonds at the C-11 and C-11' positions of phytoene with a concomitant isomerization of two neighboring double bonds at the C9 and C9' positions from trans to cis. This is 15-cis-phytoene desaturase, chloroplastic/chromoplastic (PDS) from Oncidium hybrid cultivar (Orchid).